The chain runs to 151 residues: Histone H2A.2.1 (151 aa).

The residue at position 1 (Met1) is an N-acetylmethionine. 2 disordered regions span residues 1-22 (MDGS…KKSV) and 129-151 (EKAE…PKKA). Short sequence motifs (SPKK motif) lie at residues 140-143 (SPKK) and 147-150 (SPKK). Positions 140 to 151 (SPKKTTKSPKKA) are enriched in basic residues.

This sequence belongs to the histone H2A family. In terms of assembly, the nucleosome is a histone octamer containing two molecules each of H2A, H2B, H3 and H4 assembled in one H3-H4 heterotetramer and two H2A-H2B heterodimers. The octamer wraps approximately 147 bp of DNA. In terms of processing, phosphorylated within its C-terminal part, probably at the SPKK motifs.

The protein resides in the nucleus. Its subcellular location is the chromosome. Its function is as follows. Core component of nucleosome. Nucleosomes wrap and compact DNA into chromatin, limiting DNA accessibility to the cellular machineries which require DNA as a template. Histones thereby play a central role in transcription regulation, DNA repair, DNA replication and chromosomal stability. DNA accessibility is regulated via a complex set of post-translational modifications of histones, also called histone code, and nucleosome remodeling. The protein is Histone H2A.2.1 of Triticum aestivum (Wheat).